A 146-amino-acid chain; its full sequence is Large ribosomal subunit protein uL15 (146 aa).

Residues 1–13 (MKLHELKPSEGSR) show a composition bias toward basic and acidic residues. The tract at residues 1-57 (MKLHELKPSEGSRKTRNRVGRGIGSGNGKTAGKGHKGQNARSGGGVRPGFEGGQMPL) is disordered. 2 stretches are compositionally biased toward gly residues: residues 21-31 (RGIGSGNGKTA) and 42-52 (SGGGVRPGFEG).

The protein belongs to the universal ribosomal protein uL15 family. In terms of assembly, part of the 50S ribosomal subunit.

Its function is as follows. Binds to the 23S rRNA. The protein is Large ribosomal subunit protein uL15 of Bacillus subtilis (strain 168).